Reading from the N-terminus, the 429-residue chain is UDP-N-acetylglucosamine 1-carboxyvinyltransferase (429 aa).

22–23 provides a ligand contact to phosphoenolpyruvate; it reads KN. Arginine 102 lines the UDP-N-acetyl-alpha-D-glucosamine pocket. The active-site Proton donor is the cysteine 126. Residue cysteine 126 is modified to 2-(S-cysteinyl)pyruvic acid O-phosphothioketal. UDP-N-acetyl-alpha-D-glucosamine-binding positions include 131 to 135, aspartate 316, and isoleucine 338; that span reads RPVDL.

This sequence belongs to the EPSP synthase family. MurA subfamily.

Its subcellular location is the cytoplasm. It catalyses the reaction phosphoenolpyruvate + UDP-N-acetyl-alpha-D-glucosamine = UDP-N-acetyl-3-O-(1-carboxyvinyl)-alpha-D-glucosamine + phosphate. It participates in cell wall biogenesis; peptidoglycan biosynthesis. Cell wall formation. Adds enolpyruvyl to UDP-N-acetylglucosamine. The chain is UDP-N-acetylglucosamine 1-carboxyvinyltransferase from Rhodopseudomonas palustris (strain HaA2).